A 232-amino-acid chain; its full sequence is UPF0758 protein BH3032 (232 aa).

In terms of domain architecture, MPN spans valine 107–leucine 229. 3 residues coordinate Zn(2+): histidine 178, histidine 180, and aspartate 191. A JAMM motif motif is present at residues histidine 178–aspartate 191.

It belongs to the UPF0758 family.

The polypeptide is UPF0758 protein BH3032 (Halalkalibacterium halodurans (strain ATCC BAA-125 / DSM 18197 / FERM 7344 / JCM 9153 / C-125) (Bacillus halodurans)).